The sequence spans 175 residues: Translation initiation factor IF-3 (175 aa).

This sequence belongs to the IF-3 family. As to quaternary structure, monomer.

It localises to the cytoplasm. In terms of biological role, IF-3 binds to the 30S ribosomal subunit and shifts the equilibrium between 70S ribosomes and their 50S and 30S subunits in favor of the free subunits, thus enhancing the availability of 30S subunits on which protein synthesis initiation begins. The protein is Translation initiation factor IF-3 of Staphylococcus aureus (strain NCTC 8325 / PS 47).